A 325-amino-acid polypeptide reads, in one-letter code: Coiled-coil domain-containing protein 160 (325 aa).

2 disordered regions span residues 18 to 45 and 81 to 123; these read SAQDVLEETSEPESSSEQTTADSSKGME and ENKR…CSTD. The segment covering 81 to 91 has biased composition (basic and acidic residues); that stretch reads ENKRNISKNET. The span at 92 to 123 shows a compositional bias: polar residues; it reads DTNSASYESSNVDVTTEESFNSTEDNSTCSTD. Residues 144-288 adopt a coiled-coil conformation; sequence KLCLNLLNEE…SVIKNELRTE (145 aa).

It belongs to the CCDC160 family.

The sequence is that of Coiled-coil domain-containing protein 160 (CCDC160) from Homo sapiens (Human).